Reading from the N-terminus, the 392-residue chain is Hercynylcysteine sulfoxide lyase (392 aa).

At Lys219 the chain carries N6-(pyridoxal phosphate)lysine.

The protein belongs to the class-V pyridoxal-phosphate-dependent aminotransferase family. EgtE subfamily. It depends on pyridoxal 5'-phosphate as a cofactor.

The protein localises to the cytoplasm. The protein resides in the nucleus. The catalysed reaction is S-(hercyn-2-yl)-L-cysteine S-oxide + AH2 + H(+) = ergothioneine + pyruvate + A + NH4(+). It functions in the pathway amino-acid biosynthesis; ergothioneine biosynthesis. In terms of biological role, catalyzes the conversion of hercynylcysteine sulfoxide to ergothioneine by cleaving the cysteine residue at the sulfur atom, the last step in the biosynthesis pathway of ergothioneine. The sequence is that of Hercynylcysteine sulfoxide lyase from Schizosaccharomyces pombe (strain 972 / ATCC 24843) (Fission yeast).